We begin with the raw amino-acid sequence, 149 residues long: Internal scaffolding protein ORF3 (149 aa).

Belongs to the microvidae B protein family.

Its subcellular location is the host cytoplasm. Participates in the assembly of the viral procapsid in the cytoplasm. Released from the procapsid upon genome packaging, possibly through affinity displacement by the protein ORF8, or by proteolysis. This is Internal scaffolding protein ORF3 from Spiroplasma virus 4 (SpV4).